A 914-amino-acid chain; its full sequence is Translation initiation factor IF-2 (914 aa).

Positions 58–160 are disordered; the sequence is KTEKKQTAKK…EAEPKIEVMP (103 aa). Over residues 70–91 the composition is skewed to basic and acidic residues; sequence KKDTVKKDTVKKTAVKKDDSKA. Residues 92–103 show a composition bias toward basic residues; sequence AKKTKPIAKKSA. The segment covering 104–160 has biased composition (basic and acidic residues); that stretch reads PKTEKKVEKKVESKISKPDNEILEAKPEISKPEIKAEPKKEEIEQKQEAEPKIEVMP. The 170-residue stretch at 413-582 folds into the tr-type G domain; sequence ERVPVITIMG…LLQADLLELK (170 aa). A G1 region spans residues 422–429; it reads GHVDHGKT. 422 to 429 is a binding site for GTP; sequence GHVDHGKT. A G2 region spans residues 447-451; sequence GITQH. The G3 stretch occupies residues 468–471; it reads DTPG. Residues 468–472 and 522–525 each bind GTP; these read DTPGH and NKMD. Residues 522-525 are G4; that stretch reads NKMD. Residues 558-560 form a G5 region; that stretch reads SAK.

It belongs to the TRAFAC class translation factor GTPase superfamily. Classic translation factor GTPase family. IF-2 subfamily.

It is found in the cytoplasm. In terms of biological role, one of the essential components for the initiation of protein synthesis. Protects formylmethionyl-tRNA from spontaneous hydrolysis and promotes its binding to the 30S ribosomal subunits. Also involved in the hydrolysis of GTP during the formation of the 70S ribosomal complex. The polypeptide is Translation initiation factor IF-2 (Campylobacter hominis (strain ATCC BAA-381 / DSM 21671 / CCUG 45161 / LMG 19568 / NCTC 13146 / CH001A)).